Consider the following 403-residue polypeptide: Na(+)/H(+) antiporter NhaH (403 aa).

12 helical membrane-spanning segments follow: residues 7–27, 34–54, 99–119, 125–145, 168–188, 196–216, 228–245, 250–272, 282–302, 311–331, 345–365, and 373–393; these read VFIQ…IAKL, VALV…IEEA, LAFL…YFLL, VAFT…LSIF, IAVV…EMGW, FMFL…GYVF, LEVA…FIAE, SGVI…IGMS, FWDS…GLEI, WGYI…AVYI, ILIN…LSLP, and QVLL…GLTL.

This sequence belongs to the monovalent cation:proton antiporter 1 (CPA1) transporter (TC 2.A.36) family.

The protein resides in the cell membrane. In terms of biological role, na(+)/H(+) antiporter that extrudes sodium in exchange for external protons. Can also transport lithium. The polypeptide is Na(+)/H(+) antiporter NhaH (nhaH) (Halobacillus aidingensis).